The chain runs to 344 residues: Succinylglutamate desuccinylase (344 aa).

Residues His-63, Glu-66, and His-160 each contribute to the Zn(2+) site. Residue Glu-224 is part of the active site.

Belongs to the AspA/AstE family. Succinylglutamate desuccinylase subfamily. Zn(2+) is required as a cofactor.

It carries out the reaction N-succinyl-L-glutamate + H2O = L-glutamate + succinate. It functions in the pathway amino-acid degradation; L-arginine degradation via AST pathway; L-glutamate and succinate from L-arginine: step 5/5. Its function is as follows. Transforms N(2)-succinylglutamate into succinate and glutamate. The polypeptide is Succinylglutamate desuccinylase (Shewanella baltica (strain OS223)).